The sequence spans 519 residues: Bifunctional purine biosynthesis protein PurH (519 aa).

Residues Met-1–Val-145 enclose the MGS-like domain.

It belongs to the PurH family.

It catalyses the reaction (6R)-10-formyltetrahydrofolate + 5-amino-1-(5-phospho-beta-D-ribosyl)imidazole-4-carboxamide = 5-formamido-1-(5-phospho-D-ribosyl)imidazole-4-carboxamide + (6S)-5,6,7,8-tetrahydrofolate. It carries out the reaction IMP + H2O = 5-formamido-1-(5-phospho-D-ribosyl)imidazole-4-carboxamide. The protein operates within purine metabolism; IMP biosynthesis via de novo pathway; 5-formamido-1-(5-phospho-D-ribosyl)imidazole-4-carboxamide from 5-amino-1-(5-phospho-D-ribosyl)imidazole-4-carboxamide (10-formyl THF route): step 1/1. It participates in purine metabolism; IMP biosynthesis via de novo pathway; IMP from 5-formamido-1-(5-phospho-D-ribosyl)imidazole-4-carboxamide: step 1/1. This is Bifunctional purine biosynthesis protein PurH from Allochromatium vinosum (strain ATCC 17899 / DSM 180 / NBRC 103801 / NCIMB 10441 / D) (Chromatium vinosum).